A 210-amino-acid polypeptide reads, in one-letter code: Imidazole glycerol phosphate synthase subunit HisH (210 aa).

Residues 1–210 (MIAILDYGMG…KLLENFIRFI (210 aa)) form the Glutamine amidotransferase type-1 domain. Cysteine 79 acts as the Nucleophile in catalysis. Active-site residues include histidine 191 and glutamate 193.

Heterodimer of HisH and HisF.

It localises to the cytoplasm. It catalyses the reaction 5-[(5-phospho-1-deoxy-D-ribulos-1-ylimino)methylamino]-1-(5-phospho-beta-D-ribosyl)imidazole-4-carboxamide + L-glutamine = D-erythro-1-(imidazol-4-yl)glycerol 3-phosphate + 5-amino-1-(5-phospho-beta-D-ribosyl)imidazole-4-carboxamide + L-glutamate + H(+). It carries out the reaction L-glutamine + H2O = L-glutamate + NH4(+). It participates in amino-acid biosynthesis; L-histidine biosynthesis; L-histidine from 5-phospho-alpha-D-ribose 1-diphosphate: step 5/9. In terms of biological role, IGPS catalyzes the conversion of PRFAR and glutamine to IGP, AICAR and glutamate. The HisH subunit catalyzes the hydrolysis of glutamine to glutamate and ammonia as part of the synthesis of IGP and AICAR. The resulting ammonia molecule is channeled to the active site of HisF. The protein is Imidazole glycerol phosphate synthase subunit HisH of Leptospira interrogans serogroup Icterohaemorrhagiae serovar copenhageni (strain Fiocruz L1-130).